The chain runs to 434 residues: Histidinol dehydrogenase (434 aa).

Y130, Q191, and N214 together coordinate NAD(+). The substrate site is built by S237, Q259, and H262. Residues Q259 and H262 each contribute to the Zn(2+) site. Residues E327 and H328 each act as proton acceptor in the active site. 4 residues coordinate substrate: H328, D361, E415, and H420. A Zn(2+)-binding site is contributed by D361. H420 serves as a coordination point for Zn(2+).

Belongs to the histidinol dehydrogenase family. Requires Zn(2+) as cofactor.

The catalysed reaction is L-histidinol + 2 NAD(+) + H2O = L-histidine + 2 NADH + 3 H(+). It participates in amino-acid biosynthesis; L-histidine biosynthesis; L-histidine from 5-phospho-alpha-D-ribose 1-diphosphate: step 9/9. Functionally, catalyzes the sequential NAD-dependent oxidations of L-histidinol to L-histidinaldehyde and then to L-histidine. The sequence is that of Histidinol dehydrogenase from Cereibacter sphaeroides (strain ATCC 17023 / DSM 158 / JCM 6121 / CCUG 31486 / LMG 2827 / NBRC 12203 / NCIMB 8253 / ATH 2.4.1.) (Rhodobacter sphaeroides).